Consider the following 142-residue polypeptide: Calmodulin-alpha (142 aa).

Ala-2 is subject to N-acetylalanine. 4 consecutive EF-hand domains span residues 8-43, 44-79, 81-116, and 117-142; these read EQIA…LGQN, PTEA…KMKD, DSEE…LGEK, and LTDE…YEEF. Ca(2+) is bound by residues Asp-21, Asp-23, Asp-25, Thr-27, Glu-32, Asp-57, Asp-59, Asn-61, Thr-63, Glu-68, Asp-94, Asp-96, Asn-98, Tyr-100, and Glu-105. The residue at position 116 (Lys-116) is an N6,N6,N6-trimethyllysine. Positions 130, 132, 134, 136, and 141 each coordinate Ca(2+).

The protein belongs to the calmodulin family.

In terms of biological role, calmodulin mediates the control of a large number of enzymes, ion channels and other proteins by Ca(2+). Among the enzymes to be stimulated by the calmodulin-Ca(2+) complex are a number of protein kinases and phosphatases. This chain is Calmodulin-alpha, found in Arbacia punctulata (Punctuate sea urchin).